The following is a 941-amino-acid chain: Cilia- and flagella-associated protein 69 (941 aa).

The segment covering 1–14 (MWTEEAGATAEAQE) has biased composition (low complexity). Residues 1 to 26 (MWTEEAGATAEAQESGIRNKSSSSSQ) are disordered. Over residues 16 to 26 (GIRNKSSSSSQ) the composition is skewed to polar residues.

As to expression, highly expressed in the testis, specifically in sperm (at protein level). Expressed in the brain, kidney, liver, lung, and intestine.

The protein resides in the cell projection. It is found in the cilium. Its subcellular location is the flagellum. In terms of biological role, cilium- and flagellum-associated protein. In the olfactory epithelium, regulates the speed of activation and termination of the odor response and thus contributes to the robustness of olfactory transduction pathways. Required for sperm flagellum assembly and stability. The chain is Cilia- and flagella-associated protein 69 from Homo sapiens (Human).